Reading from the N-terminus, the 788-residue chain is LPS-assembly protein LptD (788 aa).

Positions 1–23 (MSLTSRSLLATMISLALYGPAMA) are cleaved as a signal peptide.

The protein belongs to the LptD family. In terms of assembly, component of the lipopolysaccharide transport and assembly complex. Interacts with LptE and LptA.

It is found in the cell outer membrane. Functionally, together with LptE, is involved in the assembly of lipopolysaccharide (LPS) at the surface of the outer membrane. This Photobacterium profundum (strain SS9) protein is LPS-assembly protein LptD.